The primary structure comprises 189 residues: Protein YOP1 (189 aa).

At 1 to 35 the chain is on the cytoplasmic side; it reads MSQIIDQVQAALQNIDKELEKYPALKELEKQIPVP. The chain crosses the membrane as a helical span at residues 36–55; the sequence is KSYILLGFVGFYFILIFLNI. Topologically, residues 56–57 are lumenal; that stretch reads GG. A helical transmembrane segment spans residues 58 to 78; it reads IGQLLSNIAGLVIPGYYSLLA. The Cytoplasmic portion of the chain corresponds to 79–88; it reads LETPGKADDT. Residues 89–105 traverse the membrane as a helical segment; sequence QYLTYWVVFATLNVFEF. Topologically, residues 106–108 are lumenal; that stretch reads WSK. The chain crosses the membrane as a helical span at residues 109–127; the sequence is AILYWVPFYYLFKTAFLLY. Over 128-189 the chain is Cytoplasmic; it reads IGLPQYGGAE…PQGHSTGVSH (62 aa).

It belongs to the DP1 family. Oligomer.

The protein localises to the endoplasmic reticulum membrane. The protein resides in the golgi apparatus membrane. Required to generate and maintain the structure of the tubular endoplasmic reticulum network and the vacuole. Induces high curvature in membranes and causes membrane tubule formation. Involved in membrane/vesicle trafficking. This Yarrowia lipolytica (strain CLIB 122 / E 150) (Yeast) protein is Protein YOP1 (YOP1).